The sequence spans 263 residues: Endonuclease 8 (263 aa).

Pro2 serves as the catalytic Schiff-base intermediate with DNA. Glu3 acts as the Proton donor in catalysis. The active-site Proton donor; for beta-elimination activity is the Lys53. The DNA site is built by Gln70, Arg125, and Asn169. The FPG-type zinc-finger motif lies at 229 to 263 (KVFHRDGEACERCGGIIEKTTLSSRPFYWCPHCQK). Catalysis depends on Arg253, which acts as the Proton donor; for delta-elimination activity.

Belongs to the FPG family. Zn(2+) serves as cofactor.

The catalysed reaction is 2'-deoxyribonucleotide-(2'-deoxyribose 5'-phosphate)-2'-deoxyribonucleotide-DNA = a 3'-end 2'-deoxyribonucleotide-(2,3-dehydro-2,3-deoxyribose 5'-phosphate)-DNA + a 5'-end 5'-phospho-2'-deoxyribonucleoside-DNA + H(+). Its function is as follows. Involved in base excision repair of DNA damaged by oxidation or by mutagenic agents. Acts as a DNA glycosylase that recognizes and removes damaged bases. Has a preference for oxidized pyrimidines, such as thymine glycol, 5,6-dihydrouracil and 5,6-dihydrothymine. Has AP (apurinic/apyrimidinic) lyase activity and introduces nicks in the DNA strand. Cleaves the DNA backbone by beta-delta elimination to generate a single-strand break at the site of the removed base with both 3'- and 5'-phosphates. This Salmonella enteritidis PT4 (strain P125109) protein is Endonuclease 8.